The chain runs to 428 residues: UPF0597 protein BF3560 (428 aa).

Belongs to the UPF0597 family.

This is UPF0597 protein BF3560 from Bacteroides fragilis (strain ATCC 25285 / DSM 2151 / CCUG 4856 / JCM 11019 / LMG 10263 / NCTC 9343 / Onslow / VPI 2553 / EN-2).